The chain runs to 488 residues: 3-octaprenyl-4-hydroxybenzoate carboxy-lyase (488 aa).

Asparagine 172 contacts Mn(2+). Prenylated FMN is bound by residues 175-177, 189-191, and 194-195; these read IYR, RWL, and RG. Position 238 (glutamate 238) interacts with Mn(2+). Aspartate 287 functions as the Proton donor in the catalytic mechanism.

This sequence belongs to the UbiD family. As to quaternary structure, homohexamer. It depends on prenylated FMN as a cofactor. Mn(2+) serves as cofactor.

The protein resides in the cell membrane. It carries out the reaction a 4-hydroxy-3-(all-trans-polyprenyl)benzoate + H(+) = a 2-(all-trans-polyprenyl)phenol + CO2. It functions in the pathway cofactor biosynthesis; ubiquinone biosynthesis. In terms of biological role, catalyzes the decarboxylation of 3-octaprenyl-4-hydroxy benzoate to 2-octaprenylphenol, an intermediate step in ubiquinone biosynthesis. This is 3-octaprenyl-4-hydroxybenzoate carboxy-lyase from Alteromonas mediterranea (strain DSM 17117 / CIP 110805 / LMG 28347 / Deep ecotype).